We begin with the raw amino-acid sequence, 438 residues long: Aspartate aminotransferase, cytoplasmic (438 aa).

The L-aspartate site is built by glycine 73, tryptophan 167, and asparagine 220. The residue at position 284 (lysine 284) is an N6-(pyridoxal phosphate)lysine. Residue arginine 412 participates in L-aspartate binding.

The protein belongs to the class-I pyridoxal-phosphate-dependent aminotransferase family. In terms of assembly, homodimer. Requires pyridoxal 5'-phosphate as cofactor.

The protein localises to the cytoplasm. It carries out the reaction L-aspartate + 2-oxoglutarate = oxaloacetate + L-glutamate. In terms of biological role, plays a key role in amino acid metabolism. The chain is Aspartate aminotransferase, cytoplasmic (aatB) from Dictyostelium discoideum (Social amoeba).